The primary structure comprises 174 residues: Photosystem I assembly protein Ycf4 (174 aa).

2 helical membrane passes run 11 to 31 and 56 to 76; these read LSNI…FLNG and IILM…CLTI.

Belongs to the Ycf4 family.

It localises to the plastid. The protein resides in the chloroplast thylakoid membrane. In terms of biological role, seems to be required for the assembly of the photosystem I complex. This Emiliania huxleyi (Coccolithophore) protein is Photosystem I assembly protein Ycf4.